We begin with the raw amino-acid sequence, 129 residues long: MNSATSLMCFALLLISPLCMGYTAEDREADSRRVAEIIKNSQDDNSKINSIQELLDIYKRLYPSLTPEERESIDNFVNEHTDEVLVDGVPSQGGRKTKFAGKILSEATKGVATGFFEELGSKLAGLFTG.

An N-terminal signal peptide occupies residues 1–21; sequence MNSATSLMCFALLLISPLCMG.

Belongs to the Turandot family.

Its subcellular location is the secreted. Functionally, a humoral factor that may play a role in stress tolerance. The sequence is that of Protein Turandot B2 (TotB2) from Drosophila erecta (Fruit fly).